A 491-amino-acid chain; its full sequence is Protein nucleotidyltransferase YdiU (491 aa).

The ATP site is built by Gly-94, Gly-96, Arg-97, Lys-117, Asp-129, Gly-130, Arg-180, and Arg-187. Asp-256 (proton acceptor) is an active-site residue. 2 residues coordinate Mg(2+): Asn-257 and Asp-266. ATP is bound at residue Asp-266.

The protein belongs to the SELO family. Mg(2+) serves as cofactor. The cofactor is Mn(2+).

It catalyses the reaction L-seryl-[protein] + ATP = 3-O-(5'-adenylyl)-L-seryl-[protein] + diphosphate. The catalysed reaction is L-threonyl-[protein] + ATP = 3-O-(5'-adenylyl)-L-threonyl-[protein] + diphosphate. The enzyme catalyses L-tyrosyl-[protein] + ATP = O-(5'-adenylyl)-L-tyrosyl-[protein] + diphosphate. It carries out the reaction L-histidyl-[protein] + UTP = N(tele)-(5'-uridylyl)-L-histidyl-[protein] + diphosphate. It catalyses the reaction L-seryl-[protein] + UTP = O-(5'-uridylyl)-L-seryl-[protein] + diphosphate. The catalysed reaction is L-tyrosyl-[protein] + UTP = O-(5'-uridylyl)-L-tyrosyl-[protein] + diphosphate. Functionally, nucleotidyltransferase involved in the post-translational modification of proteins. It can catalyze the addition of adenosine monophosphate (AMP) or uridine monophosphate (UMP) to a protein, resulting in modifications known as AMPylation and UMPylation. The protein is Protein nucleotidyltransferase YdiU of Clostridium botulinum (strain 657 / Type Ba4).